We begin with the raw amino-acid sequence, 672 residues long: NADPH-Fe(3+) oxidoreductase subunit beta (672 aa).

The [4Fe-4S] cluster site is built by cysteine 203, cysteine 207, cysteine 211, and cysteine 215. Residue 254–283 coordinates FAD; the sequence is KKVAIVGAGPAGLACAYYLALEGYPCTIYE. Residue 388-421 participates in NADP(+) binding; sequence GKKVVVVGGGNTAIDCVRVALREGAEESTLLYRR. Position 552 to 562 (552 to 562) interacts with FAD; sequence TDLEGVFAGGD.

In terms of assembly, heterotetramer with 2 alpha subunits. [4Fe-4S] cluster serves as cofactor. It depends on FAD as a cofactor.

The protein resides in the cell membrane. In terms of biological role, probably involved in acetate metabolism and not in the reduction of Fe(3+) chelates. May serve as a major route for NADP regeneration. The sequence is that of NADPH-Fe(3+) oxidoreductase subunit beta (sfrB) from Geobacter sulfurreducens (strain DL-1 / KN400).